Reading from the N-terminus, the 356-residue chain is GDP-mannose 4,6 dehydratase (356 aa).

NADP(+) contacts are provided by residues 12-17 (GITGQD), 69-70 (DL), 91-95 (LGAQS), and tyrosine 106. Threonine 138 is an active-site residue. Catalysis depends on nucleophile residues glutamate 140 and tyrosine 162. Positions 166, 192, and 197 each coordinate NADP(+).

The protein belongs to the NAD(P)-dependent epimerase/dehydratase family. GDP-mannose 4,6-dehydratase subfamily. It depends on NADP(+) as a cofactor.

The enzyme catalyses GDP-alpha-D-mannose = GDP-4-dehydro-alpha-D-rhamnose + H2O. The protein operates within nucleotide-sugar biosynthesis; GDP-L-fucose biosynthesis via de novo pathway; GDP-L-fucose from GDP-alpha-D-mannose: step 1/2. Functionally, participates in the synthesis of GDP-L-fucose, catalyzing the conversion of GDP-D-mannose to GDP-4-dehydro-6-deoxy-D-mannose (GDP-4-dehydro-alpha-D-rhamnose) which is further catalyzed by GDP-L-fucose synthase (ger). GDP-L-fucose is important for the synthesis of fucosylated N-glycans which are expressed on the cell surface. This chain is GDP-mannose 4,6 dehydratase (gmd), found in Dictyostelium discoideum (Social amoeba).